The sequence spans 378 residues: IDS-type sesquiterpene synthase (378 aa).

Residues D120 and D124 each contribute to the Mg(2+) site. The DDXXD motif signature appears at 120–124; the sequence is DDYVD.

This sequence belongs to the terpene synthase family. Mg(2+) is required as a cofactor. In terms of tissue distribution, highly expressed in male epidermal tissue associated with the cuticle of ventral sternites.

It carries out the reaction (2Z,6E)-farnesyl diphosphate = (Z)-alpha-bisabolene + diphosphate. It participates in pheromone biosynthesis. Its function is as follows. Sesquiterpene alcohol synthase that catalyzes the formation of the pheromone precursor (Z)-alpha-bisabolene from (2Z,6E)-farnesyl diphosphate. The chain is IDS-type sesquiterpene synthase from Nezara viridula (Southern green stink bug).